Consider the following 160-residue polypeptide: Large ribosomal subunit protein eL21 (160 aa).

The protein belongs to the eukaryotic ribosomal protein eL21 family. Component of the large ribosomal subunit. Mature ribosomes consist of a small (40S) and a large (60S) subunit. The 40S subunit contains about 32 different proteins and 1 molecule of RNA (18S). The 60S subunit contains 45 different proteins and 3 molecules of RNA (25S, 5.8S and 5S).

Its subcellular location is the cytoplasm. In terms of biological role, component of the ribosome, a large ribonucleoprotein complex responsible for the synthesis of proteins in the cell. The small ribosomal subunit (SSU) binds messenger RNAs (mRNAs) and translates the encoded message by selecting cognate aminoacyl-transfer RNA (tRNA) molecules. The large subunit (LSU) contains the ribosomal catalytic site termed the peptidyl transferase center (PTC), which catalyzes the formation of peptide bonds, thereby polymerizing the amino acids delivered by tRNAs into a polypeptide chain. The nascent polypeptides leave the ribosome through a tunnel in the LSU and interact with protein factors that function in enzymatic processing, targeting, and the membrane insertion of nascent chains at the exit of the ribosomal tunnel. The protein is Large ribosomal subunit protein eL21 of Candida albicans (strain SC5314 / ATCC MYA-2876) (Yeast).